The primary structure comprises 358 residues: MAYYKGAASEGGRAAQLMKRRELAQQEVEFRKKKIEEDLKVSNIENKFAAHYDAVEQQLKSSTIGLVTLDEMKAKQEDIVREREKKLAQKKEEKDKEKLKALEAKLAEKDRQKRQIQALSFDPDDEPDGDDANDGDEGSGKESEKEDVKEELTVVKRSWKEQVPSGVKKIRKNPDVDTSFLPDREREERDNRLREELRQEWAMKQATLKDQEITITFSYWDGSGHRKSVAMKKGNSIYQFLQKCLEMLRKDFSELKTVMADQLMYVKEDLILPHHYTFYDFIVTKARGKSGPLFNFDVYDDIRMISDASVEKEDSHAGKVLLRSWYERNKHIFPASRWEPYDPTKVYDKYTIKDKSKK.

Over residues 104–113 (AKLAEKDRQK) the composition is skewed to basic and acidic residues. The tract at residues 104-151 (AKLAEKDRQKRQIQALSFDPDDEPDGDDANDGDEGSGKESEKEDVKEE) is disordered. The span at 122-137 (DPDDEPDGDDANDGDE) shows a compositional bias: acidic residues. Positions 138–151 (GSGKESEKEDVKEE) are enriched in basic and acidic residues.

It belongs to the FAM50 family.

In Anopheles gambiae (African malaria mosquito), this protein is Protein FAM50 homolog.